Consider the following 359-residue polypeptide: Peptide chain release factor 1 (359 aa).

The residue at position 234 (glutamine 234) is an N5-methylglutamine. Residues 283 to 305 (SQKDAARAADRRAQVGSGDRSER) form a disordered region.

Belongs to the prokaryotic/mitochondrial release factor family. In terms of processing, methylated by PrmC. Methylation increases the termination efficiency of RF1.

It localises to the cytoplasm. Peptide chain release factor 1 directs the termination of translation in response to the peptide chain termination codons UAG and UAA. This is Peptide chain release factor 1 from Methylobacterium nodulans (strain LMG 21967 / CNCM I-2342 / ORS 2060).